Here is a 302-residue protein sequence, read N- to C-terminus: MSPAAELSPTPFGRLLTAMVTPFDAEGRVDFALAGRLARHLVEEGSEGLVVCGTTGESPTLSWQEQVKMLEVVRQAVGPGVKVLAGTGSNSTGEAVKATREAAASGADGALVVVPYYNKPPQEGLEAHFRAIANAAPELPLMLYNVPGRTGTSLAPATAAQLMNCANVVSFKAASGSIEEVTELRLACGPRLAVYSGDDGLLLPMLSAGAVGVVSVASHVVGRRLRHMIDAYLSGQNAVALGQHEQLTPLFQALFATSNPIPVKAALELSGWPVGAPRLPLLPLNSAMRDSLADLLTALRQT.

Residue T55 participates in pyruvate binding. Catalysis depends on Y144, which acts as the Proton donor/acceptor. The active-site Schiff-base intermediate with substrate is K172. V214 lines the pyruvate pocket.

Belongs to the DapA family. In terms of assembly, homotetramer; dimer of dimers.

It is found in the cytoplasm. It catalyses the reaction L-aspartate 4-semialdehyde + pyruvate = (2S,4S)-4-hydroxy-2,3,4,5-tetrahydrodipicolinate + H2O + H(+). Its pathway is amino-acid biosynthesis; L-lysine biosynthesis via DAP pathway; (S)-tetrahydrodipicolinate from L-aspartate: step 3/4. Functionally, catalyzes the condensation of (S)-aspartate-beta-semialdehyde [(S)-ASA] and pyruvate to 4-hydroxy-tetrahydrodipicolinate (HTPA). The sequence is that of 4-hydroxy-tetrahydrodipicolinate synthase from Synechococcus sp. (strain CC9311).